We begin with the raw amino-acid sequence, 800 residues long: MASTNVTGQCPGPMKATSNGAFQNESPLDFALPLIILQIVLVVVFTRLLAYFLKPLKQPRVIAEIIGGILLGPSALGRSKAYLDTIFPKKSLTVLDTLANIGLLFFLFLVGLELDFAAIKKTGKKSLLIAIAGISLPFIVGVGTSFVLSATISKGVDQLPFIVFMGVALSITAFPVLARILAELKLLTTDIGRMAMSAAGVNDVAAWILLALAIALSGDGTSPLVSVWVLLCGTGFVIFAVVAIKPLLAYMARRCPEGEPVKELYVCVTLTVVLAASFVTDTIGIHALFGAFVVGIVAPKEGPFCRILTEKIEDLVSGLLLPLYFAASGLKTDVTTIRGAQSWGLLVLVILTTCFGKIVGTVGSSMLCKVPFREAVTLGFLMNTKGLVELIVLNIGKDRKVLNDQAFAILVLMALFTTFITTPIVMLIYKPARKGAPYKHRTIQRKDHDSELRILACFHSTRNIPTLINLIESSRGTGKKGRLCVYAMHLMELSERSSAIAMVHKARNNGLPIWNKIERSTDQMVIAFEAYQHLRAVAVRPMTAISGLSSIHEDICTSAHQKRVAMILLPFHKHQRMDGAMESIGHRFHEVNQRVLQRAPCSVGILVDRGLGGTSQVVASEVAYKVVIPFFGGLDDREALAYGMKMVEHPGITLTVYKFVAARGTLKRFEKSEHDEKEKKEKETDEEFVRELMNDPRGNESLAYEERVVESKDDIIATLKSMSKCNLFVVGRNAAVASLVKSTDCPELGPVGRLLSSSEFSTTASVLVVQGYDPAADTRPLVEEDAEYDQSSRDISDLTA.

A run of 12 helical transmembrane segments spans residues 30–50 (FALP…RLLA), 60–77 (RVIA…SALG), 92–112 (LTVL…LVGL), 127–147 (LLIA…TSFV), 158–178 (QLPF…PVLA), 196–216 (MSAA…AIAL), 224–244 (LVSV…VVAI), 278–298 (FVTD…GIVA), 315–335 (LVSG…TDVT), 343–363 (WGLL…GTVG), 375–395 (AVTL…VLNI), and 408–428 (AILV…VMLI). The interval 776 to 800 (ADTRPLVEEDAEYDQSSRDISDLTA) is disordered. Positions 790–800 (QSSRDISDLTA) are enriched in basic and acidic residues.

This sequence belongs to the monovalent cation:proton antiporter 2 (CPA2) transporter (TC 2.A.37) family. CHX (TC 2.A.37.4) subfamily. Expressed in the whole plant but preferentially in pollen.

The protein localises to the membrane. In terms of biological role, may operate as a cation/H(+) antiporter. This is Cation/H(+) antiporter 19 (CHX19) from Arabidopsis thaliana (Mouse-ear cress).